We begin with the raw amino-acid sequence, 661 residues long: Putative DUF21 domain-containing protein At3g13070, chloroplastic (661 aa).

The transit peptide at 1 to 71 (MMGMALELSV…RSCEFSYRSR (71 aa)) directs the protein to the chloroplast. Transmembrane regions (helical) follow at residues 105–125 (GIVI…KVLA), 162–182 (GLIL…ETSI), 213–233 (FLTT…ALVT), 239–259 (IFGE…ILLL), and 285–305 (WLSL…MGIL). Positions 154-340 (VLTVLREQGL…ELSGAIEEEE (187 aa)) constitute a CNNM transmembrane domain. 2 consecutive CBS domains span residues 359–420 (MTPL…LLES) and 426–484 (MAHK…IFDE). Disordered regions lie at residues 559 to 578 (ESWE…QEPK) and 628 to 661 (SSEE…KKQQ). Acidic residues-rich tracts occupy residues 560-570 (SWEEDGEEEEG) and 630-643 (EEDD…EDQS). Basic and acidic residues predominate over residues 648–661 (LDEHVLADNSKKQQ).

It is found in the plastid. Its subcellular location is the chloroplast membrane. In Arabidopsis thaliana (Mouse-ear cress), this protein is Putative DUF21 domain-containing protein At3g13070, chloroplastic (CBSDUFCH1).